Reading from the N-terminus, the 184-residue chain is UPF0397 protein SAOUHSC_03020 (184 aa).

A run of 5 helical transmembrane segments spans residues 11 to 31 (VVAI…VVIP), 44 to 64 (AFLA…TGLV), 77 to 97 (AWWS…WIGL), 116 to 136 (IGQI…LDIL), and 148 to 168 (QGVI…TILL).

The protein belongs to the UPF0397 family.

It localises to the cell membrane. In Staphylococcus aureus (strain NCTC 8325 / PS 47), this protein is UPF0397 protein SAOUHSC_03020.